Consider the following 238-residue polypeptide: MKVSLFITCLVDMFQSNVGKATVELLERLGCEVDFPEGQICCGQPAYNSGYVKDSKKAMRRMIETFESAEYVVSPSGSCAFMFKEYPHLFRDEPAWAEKAQRLADKTYELTDFIVNVLKIEDVGATLEKKATYHTSCHMTRLLGVTDAPMKLLRHVKGLEFTPLPRKHDCCGFGGTFSVKMSQISEQMVDEKVACVEETAADVLIGADCGCLMNIGGRIGRKNKPIEVMHIAEVLNSR.

The protein belongs to the LutA/YkgE family.

Functionally, is involved in L-lactate degradation and allows cells to grow with lactate as the sole carbon source. The chain is Lactate utilization protein A from Bacillus licheniformis (strain ATCC 14580 / DSM 13 / JCM 2505 / CCUG 7422 / NBRC 12200 / NCIMB 9375 / NCTC 10341 / NRRL NRS-1264 / Gibson 46).